A 213-amino-acid chain; its full sequence is 3-isopropylmalate dehydratase small subunit (213 aa).

The protein belongs to the LeuD family. LeuD type 1 subfamily. In terms of assembly, heterodimer of LeuC and LeuD.

It catalyses the reaction (2R,3S)-3-isopropylmalate = (2S)-2-isopropylmalate. It participates in amino-acid biosynthesis; L-leucine biosynthesis; L-leucine from 3-methyl-2-oxobutanoate: step 2/4. Catalyzes the isomerization between 2-isopropylmalate and 3-isopropylmalate, via the formation of 2-isopropylmaleate. The protein is 3-isopropylmalate dehydratase small subunit of Neisseria meningitidis serogroup A / serotype 4A (strain DSM 15465 / Z2491).